A 257-amino-acid polypeptide reads, in one-letter code: UPF0246 protein ACICU_02469 (257 aa).

The protein belongs to the UPF0246 family.

The protein is UPF0246 protein ACICU_02469 of Acinetobacter baumannii (strain ACICU).